Here is a 174-residue protein sequence, read N- to C-terminus: Thiol-disulfide oxidoreductase ResA (174 aa).

The helical; Signal-anchor for type II membrane protein transmembrane segment at 11–30 (TAILLVLLAAIGYTIYTNFF) threads the bilayer. Residues 36–174 (VAVGSTAPDF…IERHLESIKP (139 aa)) enclose the Thioredoxin domain. C74 and C77 form a disulfide bridge.

The protein belongs to the thioredoxin family. ResA subfamily.

It is found in the cell membrane. The protein operates within protein modification; cytochrome c assembly. Thiol-disulfide oxidoreductase which is required in disulfide reduction during c-type cytochrome synthesis. May accept reducing equivalents from CcdA, leading to breakage of disulfide bonds in apocytochrome c; following this reduction heme can be covalently attached. In Geobacillus kaustophilus (strain HTA426), this protein is Thiol-disulfide oxidoreductase ResA.